A 457-amino-acid polypeptide reads, in one-letter code: Exodeoxyribonuclease 7 large subunit (457 aa).

This sequence belongs to the XseA family. In terms of assembly, heterooligomer composed of large and small subunits.

Its subcellular location is the cytoplasm. It carries out the reaction Exonucleolytic cleavage in either 5'- to 3'- or 3'- to 5'-direction to yield nucleoside 5'-phosphates.. In terms of biological role, bidirectionally degrades single-stranded DNA into large acid-insoluble oligonucleotides, which are then degraded further into small acid-soluble oligonucleotides. The protein is Exodeoxyribonuclease 7 large subunit of Escherichia coli O127:H6 (strain E2348/69 / EPEC).